We begin with the raw amino-acid sequence, 128 residues long: Large ribosomal subunit protein bL17 (128 aa).

It belongs to the bacterial ribosomal protein bL17 family. In terms of assembly, part of the 50S ribosomal subunit. Contacts protein L32.

This chain is Large ribosomal subunit protein bL17, found in Pseudomonas syringae pv. syringae (strain B728a).